Reading from the N-terminus, the 424-residue chain is Caspase-2 (424 aa).

The propeptide occupies 1–140 (MLGACGMQRY…IVEHSLDSGD (140 aa)). In terms of domain architecture, CARD spans 7–96 (MQRYHQEALK…QHLAEMILKT (90 aa)). Catalysis depends on residues histidine 248 and cysteine 291. Positions 296-310 (TDRGVDQRDGKERSD) are enriched in basic and acidic residues. A disordered region spans residues 296-325 (TDRGVDQRDGKERSDSPGCEESDANKEENL).

It belongs to the peptidase C14A family. Heterotetramer that consists of two anti-parallel arranged heterodimers, each one formed by a p18 subunit and a p12 subunit.

It catalyses the reaction Strict requirement for an Asp residue at P1, with 316-Asp being essential for proteolytic activity and has a preferred cleavage sequence of Val-Asp-Val-Ala-Asp-|-.. Its function is as follows. Involved in the activation cascade of caspases responsible for apoptosis execution. Might function by either activating some proteins required for cell death or inactivating proteins necessary for cell survival. The polypeptide is Caspase-2 (CASP2) (Gallus gallus (Chicken)).